The primary structure comprises 26 residues: uncharacterized protein (26 aa).

The protein localises to the plastid. Its subcellular location is the chloroplast. This is an uncharacterized protein from Trieres chinensis (Marine centric diatom).